Reading from the N-terminus, the 49-residue chain is Lectin alpha chain (49 aa).

Belongs to the leguminous lectin family. As to quaternary structure, homotetramer. Post-translationally, the beta and gamma chains are produced by partial proteolytic processing of the lectin alpha chain by an asparaginyl endopeptidase. Mixture of 60% alpha lectin and 40% of its beta and gamma proteolytic fragments. As to expression, seed.

D-mannose/D-glucose-binding lectin. This Dioclea violacea protein is Lectin alpha chain.